The following is a 201-amino-acid chain: Small ribosomal subunit protein uS4c (201 aa).

A disordered region spans residues 20–39; it reads GLTRKTPKSGSNLKKKFHSG. One can recognise an S4 RNA-binding domain in the interval 89–150; the sequence is MRLDNILFRL…NQRSKRLVQN (62 aa).

It belongs to the universal ribosomal protein uS4 family. Part of the 30S ribosomal subunit. Contacts protein S5. The interaction surface between S4 and S5 is involved in control of translational fidelity.

It is found in the plastid. The protein resides in the chloroplast. One of the primary rRNA binding proteins, it binds directly to 16S rRNA where it nucleates assembly of the body of the 30S subunit. Functionally, with S5 and S12 plays an important role in translational accuracy. The protein is Small ribosomal subunit protein uS4c (rps4) of Oryza nivara (Indian wild rice).